Consider the following 1447-residue polypeptide: Gag-Pol polyprotein (1447 aa).

Glycine 2 is lipidated: N-myristoyl glycine; by host. Residues 7–31 (VLSGGELDRWEKIRLRPGGKKKYKL) form an interaction with Gp41 region. The interval 8-43 (LSGGELDRWEKIRLRPGGKKKYKLKHIVWASRELER) is interaction with host CALM1. Positions 12 to 19 (ELDRWEKI) are interaction with host AP3D1. Residues 14-33 (DRWEKIRLRPGGKKKYKLKH) form an interaction with membrane phosphatidylinositol 4,5-bisphosphate and RNA region. Positions 16-22 (WEKIRLR) match the Nuclear export signal motif. Residues 26 to 32 (KKKYKLK) carry the Nuclear localization signal motif. An interaction with membrane phosphatidylinositol 4,5-bisphosphate region spans residues 73 to 77 (EELRS). Positions 106–128 (EEQNKSKKKAQQAAADTGHSSQV) are disordered. The residue at position 132 (tyrosine 132) is a Phosphotyrosine; by host. The interaction with human PPIA/CYPA and NUP153 stretch occupies residues 189-227 (NTVGGHQAAMQMLKETINEEAAEWDRVHPVHAGPIAPGQ). Positions 277-363 (YSPTSILDIR…GGPGHKARVL (87 aa)) are dimerization/Multimerization of capsid protein p24. CCHC-type zinc fingers lie at residues 390–407 (VKCF…NCRA) and 411–428 (KGCW…DCTE). Residues 447–476 (EFSSEQTRANSPTISSEQTRANSPTRRELQ) are disordered. Residues 450–470 (SEQTRANSPTISSEQTRANSP) are compositionally biased toward polar residues. The dimerization of protease stretch occupies residues 501–505 (PQITL). The Peptidase A2 domain maps to 520–589 (KEALLDTGAD…TPVNIIGRNL (70 aa)). Aspartate 525 (for protease activity; shared with dimeric partner) is an active-site residue. 2 dimerization of protease regions span residues 549-555 (GIGGFIK) and 588-600 (NLLT…LNFP). In terms of domain architecture, Reverse transcriptase spans 643–833 (EGKISKIGPE…PPFLWMGYEL (191 aa)). Mg(2+) contacts are provided by aspartate 709, aspartate 784, and aspartate 785. Residues 826-834 (FLWMGYELH) form an RT 'primer grip' region. The short motif at 997–1013 (WETWWTEYWQATWIPEW) is the Tryptophan repeat motif element. In terms of domain architecture, RNase H type-1 spans 1033-1156 (IVGAETFYVD…VDKLVSAGIR (124 aa)). 4 residues coordinate Mg(2+): aspartate 1042, glutamate 1077, aspartate 1097, and aspartate 1148. The Integrase-type zinc-finger motif lies at 1162–1203 (DGIDKAQDEHEKYHSNWRAMASDFNLPPVVAKEIVASCDKCQ). 4 residues coordinate Zn(2+): histidine 1171, histidine 1175, cysteine 1199, and cysteine 1202. Residues 1213 to 1363 (VDCSPGIWQL…SAGERIVDII (151 aa)) enclose the Integrase catalytic domain. The Mg(2+) site is built by aspartate 1223, aspartate 1275, and glutamate 1311. The segment at residues 1382 to 1429 (FRVYYRDSRDPLWKGPAKLLWKGEGAVVIQDNSDIKVVPRRKAKIIRD) is a DNA-binding region (integrase-type).

In terms of assembly, homotrimer; further assembles as hexamers of trimers. Interacts with gp41 (via C-terminus). Interacts with host CALM1; this interaction induces a conformational change in the Matrix protein, triggering exposure of the myristate group. Interacts with host AP3D1; this interaction allows the polyprotein trafficking to multivesicular bodies during virus assembly. Part of the pre-integration complex (PIC) which is composed of viral genome, matrix protein, Vpr and integrase. As to quaternary structure, homodimer; the homodimer further multimerizes as homohexamers or homopentamers. Interacts with human PPIA/CYPA; This interaction stabilizes the capsid. Interacts with human NUP153. Interacts with host PDZD8; this interaction stabilizes the capsid. Interacts with monkey TRIM5; this interaction destabilizes the capsid. Homodimer, whose active site consists of two apposed aspartic acid residues. In terms of assembly, heterodimer of p66 RT and p51 RT (RT p66/p51). Heterodimerization of RT is essential for DNA polymerase activity. The overall folding of the subdomains is similar in p66 RT and p51 RT but the spatial arrangements of the subdomains are dramatically different. As to quaternary structure, homotetramer; may further associate as a homohexadecamer. Part of the pre-integration complex (PIC) which is composed of viral genome, matrix protein, Vpr and integrase. Interacts with human SMARCB1/INI1 and human PSIP1/LEDGF isoform 1. Interacts with human KPNA3; this interaction might play a role in nuclear import of the pre-integration complex. Interacts with human NUP153; this interaction might play a role in nuclear import of the pre-integration complex. The cofactor is Mg(2+). In terms of processing, specific enzymatic cleavages by the viral protease yield mature proteins. The protease is released by autocatalytic cleavage. The polyprotein is cleaved during and after budding, this process is termed maturation. Proteolytic cleavage of p66 RT removes the RNase H domain to yield the p51 RT subunit. Nucleocapsid protein p7 might be further cleaved after virus entry. Tyrosine phosphorylated presumably in the virion by a host kinase. Phosphorylation is apparently not a major regulator of membrane association. Post-translationally, phosphorylated possibly by host MAPK1; this phosphorylation is necessary for Pin1-mediated virion uncoating. In terms of processing, methylated by host PRMT6, impairing its function by reducing RNA annealing and the initiation of reverse transcription.

The protein resides in the host cell membrane. The protein localises to the host endosome. It is found in the host multivesicular body. Its subcellular location is the virion membrane. It localises to the host nucleus. The protein resides in the host cytoplasm. The protein localises to the virion. It carries out the reaction Specific for a P1 residue that is hydrophobic, and P1' variable, but often Pro.. The catalysed reaction is Endohydrolysis of RNA in RNA/DNA hybrids. Three different cleavage modes: 1. sequence-specific internal cleavage of RNA. Human immunodeficiency virus type 1 and Moloney murine leukemia virus enzymes prefer to cleave the RNA strand one nucleotide away from the RNA-DNA junction. 2. RNA 5'-end directed cleavage 13-19 nucleotides from the RNA end. 3. DNA 3'-end directed cleavage 15-20 nucleotides away from the primer terminus.. The enzyme catalyses 3'-end directed exonucleolytic cleavage of viral RNA-DNA hybrid.. It catalyses the reaction DNA(n) + a 2'-deoxyribonucleoside 5'-triphosphate = DNA(n+1) + diphosphate. Its activity is regulated as follows. The viral protease is inhibited by many synthetic protease inhibitors (PIs), such as amprenavir, atazanavir, indinavir, loprinavir, nelfinavir, ritonavir and saquinavir. RT can be inhibited either by nucleoside RT inhibitors (NRTIs) or by non nucleoside RT inhibitors (NNRTIs). NRTIs act as chain terminators, whereas NNRTIs inhibit DNA polymerization by binding a small hydrophobic pocket near the RT active site and inducing an allosteric change in this region. Classical NRTIs are abacavir, adefovir (PMEA), didanosine (ddI), lamivudine (3TC), stavudine (d4T), tenofovir (PMPA), zalcitabine (ddC), and zidovudine (AZT). Classical NNRTIs are atevirdine (BHAP U-87201E), delavirdine, efavirenz (DMP-266), emivirine (I-EBU), and nevirapine (BI-RG-587). The tritherapies used as a basic effective treatment of AIDS associate two NRTIs and one NNRTI. Use of protease inhibitors in tritherapy regimens permit more ambitious therapeutic strategies. Functionally, gag-Pol polyprotein and Gag polyprotein may regulate their own translation, by the binding genomic RNA in the 5'-UTR. At low concentration, Gag-Pol and Gag would promote translation, whereas at high concentration, the polyproteins encapsidate genomic RNA and then shut off translation. Matrix protein p17 targets Gag and Gag-pol polyproteins to the plasma membrane via a multipartite membrane-binding signal, that includes its myristoylated N-terminus. Matrix protein is part of the pre-integration complex. Implicated in the release from host cell mediated by Vpu. Binds to RNA. In terms of biological role, forms the conical core that encapsulates the genomic RNA-nucleocapsid complex in the virion. Most core are conical, with only 7% tubular. The core is constituted by capsid protein hexamer subunits. The core is disassembled soon after virion entry. Host restriction factors such as TRIM5-alpha or TRIMCyp bind retroviral capsids and cause premature capsid disassembly, leading to blocks in reverse transcription. Capsid restriction by TRIM5 is one of the factors which restricts HIV-1 to the human species. Host PIN1 apparently facilitates the virion uncoating. On the other hand, interactions with PDZD8 or CYPA stabilize the capsid. Its function is as follows. Nucleocapsid protein p7 encapsulates and protects viral dimeric unspliced genomic RNA (gRNA). Binds these RNAs through its zinc fingers. Acts as a nucleic acid chaperone which is involved in rearangement of nucleic acid secondary structure during gRNA retrotranscription. Also facilitates template switch leading to recombination. As part of the polyprotein, participates in gRNA dimerization, packaging, tRNA incorporation and virion assembly. Functionally, the aspartyl protease mediates proteolytic cleavages of Gag and Gag-Pol polyproteins during or shortly after the release of the virion from the plasma membrane. Cleavages take place as an ordered, step-wise cascade to yield mature proteins. This process is called maturation. Displays maximal activity during the budding process just prior to particle release from the cell. Also cleaves Nef and Vif, probably concomitantly with viral structural proteins on maturation of virus particles. Hydrolyzes host EIF4GI and PABP1 in order to shut off the capped cellular mRNA translation. The resulting inhibition of cellular protein synthesis serves to ensure maximal viral gene expression and to evade host immune response. Also mediates cleavage of host YTHDF3. Mediates cleavage of host CARD8, thereby activating the CARD8 inflammasome, leading to the clearance of latent HIV-1 in patient CD4(+) T-cells after viral reactivation; in contrast, HIV-1 can evade CARD8-sensing when its protease remains inactive in infected cells prior to viral budding. Reverse transcriptase/ribonuclease H (RT) is a multifunctional enzyme that converts the viral RNA genome into dsDNA in the cytoplasm, shortly after virus entry into the cell. This enzyme displays a DNA polymerase activity that can copy either DNA or RNA templates, and a ribonuclease H (RNase H) activity that cleaves the RNA strand of RNA-DNA heteroduplexes in a partially processive 3' to 5' endonucleasic mode. Conversion of viral genomic RNA into dsDNA requires many steps. A tRNA(3)-Lys binds to the primer-binding site (PBS) situated at the 5'-end of the viral RNA. RT uses the 3' end of the tRNA primer to perform a short round of RNA-dependent minus-strand DNA synthesis. The reading proceeds through the U5 region and ends after the repeated (R) region which is present at both ends of viral RNA. The portion of the RNA-DNA heteroduplex is digested by the RNase H, resulting in a ssDNA product attached to the tRNA primer. This ssDNA/tRNA hybridizes with the identical R region situated at the 3' end of viral RNA. This template exchange, known as minus-strand DNA strong stop transfer, can be either intra- or intermolecular. RT uses the 3' end of this newly synthesized short ssDNA to perform the RNA-dependent minus-strand DNA synthesis of the whole template. RNase H digests the RNA template except for two polypurine tracts (PPTs) situated at the 5'-end and near the center of the genome. It is not clear if both polymerase and RNase H activities are simultaneous. RNase H probably can proceed both in a polymerase-dependent (RNA cut into small fragments by the same RT performing DNA synthesis) and a polymerase-independent mode (cleavage of remaining RNA fragments by free RTs). Secondly, RT performs DNA-directed plus-strand DNA synthesis using the PPTs that have not been removed by RNase H as primers. PPTs and tRNA primers are then removed by RNase H. The 3' and 5' ssDNA PBS regions hybridize to form a circular dsDNA intermediate. Strand displacement synthesis by RT to the PBS and PPT ends produces a blunt ended, linear dsDNA copy of the viral genome that includes long terminal repeats (LTRs) at both ends. In terms of biological role, catalyzes viral DNA integration into the host chromosome, by performing a series of DNA cutting and joining reactions. This enzyme activity takes place after virion entry into a cell and reverse transcription of the RNA genome in dsDNA. The first step in the integration process is 3' processing. This step requires a complex comprising the viral genome, matrix protein, Vpr and integrase. This complex is called the pre-integration complex (PIC). The integrase protein removes 2 nucleotides from each 3' end of the viral DNA, leaving recessed CA OH's at the 3' ends. In the second step, the PIC enters cell nucleus. This process is mediated through integrase and Vpr proteins, and allows the virus to infect a non dividing cell. This ability to enter the nucleus is specific of lentiviruses, other retroviruses cannot and rely on cell division to access cell chromosomes. In the third step, termed strand transfer, the integrase protein joins the previously processed 3' ends to the 5' ends of strands of target cellular DNA at the site of integration. The 5'-ends are produced by integrase-catalyzed staggered cuts, 5 bp apart. A Y-shaped, gapped, recombination intermediate results, with the 5'-ends of the viral DNA strands and the 3' ends of target DNA strands remaining unjoined, flanking a gap of 5 bp. The last step is viral DNA integration into host chromosome. This involves host DNA repair synthesis in which the 5 bp gaps between the unjoined strands are filled in and then ligated. Since this process occurs at both cuts flanking the HIV genome, a 5 bp duplication of host DNA is produced at the ends of HIV-1 integration. Alternatively, Integrase may catalyze the excision of viral DNA just after strand transfer, this is termed disintegration. This is Gag-Pol polyprotein (gag-pol) from Homo sapiens (Human).